The sequence spans 622 residues: Mitochondrial Rho GTPase 2 (622 aa).

The Cytoplasmic portion of the chain corresponds to 1–596; it reads MRRDVRILLL…ELHPTPFWLR (596 aa). The Miro 1 domain maps to 2–168; that stretch reads RRDVRILLLG…FYYAQKAVLH (167 aa). The GTP site is built by G16, K17, T18, and S19. T18 lines the Mg(2+) pocket. Mg(2+) is bound at residue D57. S59 serves as a coordination point for GTP. K96 is covalently cross-linked (Glycyl lysine isopeptide (Lys-Gly) (interchain with G-Cter in ubiquitin)). GTP is bound by residues N118, K119, D121, A149, and K150. Residue K119 forms a Glycyl lysine isopeptide (Lys-Gly) (interchain with G-Cter in ubiquitin) linkage. K164 participates in a covalent cross-link: Glycyl lysine isopeptide (Lys-Gly) (interchain with G-Cter in ubiquitin). 2 consecutive EF-hand domains span residues 184 to 219 and 304 to 339; these read ACAQALTRIFRLSDQDLDHALSDKELNAFQKSCFGH and RGYQFVQRVFEKHDQDHDGVLSPTELESLFSVFSVA. 8 residues coordinate Ca(2+): D197, D199, D201, E208, D317, D319, D321, and E328. Residues 415–580 enclose the Miro 2 domain; that stretch reads RSVLMCKVLG…FTQLATMATF (166 aa). Residues G427, G429, K430, S431, and A432 each contribute to the GTP site. Position 431 (S431) interacts with Mg(2+). Residue E475 participates in Mg(2+) binding. GTP is bound by residues K529, D531, and C560. A helical; Anchor for type IV membrane protein transmembrane segment spans residues 597 to 619; it reads GVLVAVGTAVAAVLSFSLYRVLV. The Mitochondrial intermembrane portion of the chain corresponds to 620–622; sequence KSR.

The protein belongs to the mitochondrial Rho GTPase family. In terms of assembly, homodimer. Interacts with the kinesin-binding proteins TRAK1/OIP106 and TRAK2/GRIF1, forming a link between mitochondria and the trafficking apparatus of the microtubules. Interacts with ARMCX3. Found in a complex with KIF5B, OGT, RHOT1 and TRAK1. Post-translationally, ubiquitinated by PRKN in a PINK1-dependent manner, leading to its degradation.

Its subcellular location is the mitochondrion outer membrane. It catalyses the reaction GTP + H2O = GDP + phosphate + H(+). The enzyme catalyses ATP + H2O = ADP + phosphate + H(+). The catalysed reaction is UTP + H2O = UDP + phosphate + H(+). Its function is as follows. Atypical mitochondrial nucleoside-triphosphatase (NTPase) involved in mitochondrial trafficking. Probably involved in control of anterograde transport of mitochondria and their subcellular distribution. Can hydrolyze GTP, ATP and UTP. The protein is Mitochondrial Rho GTPase 2 (Rhot2) of Rattus norvegicus (Rat).